The sequence spans 553 residues: ATP synthase F(1) complex subunit alpha, mitochondrial (553 aa).

The N-terminal 43 residues, 1 to 43 (MLSVRIAAAVARALPRRAGLVSKNALGSSFVGTRNLHASNTRL), are a transit peptide targeting the mitochondrion. 2 positions are modified to phosphoserine: Ser53 and Ser65. Ser76 bears the Phosphoserine; alternate mark. A glycan (O-linked (GlcNAc) serine; alternate) is linked at Ser76. Ser106 carries the post-translational modification Phosphoserine. Lys123, Lys126, and Lys132 each carry N6-acetyllysine. Thr134 bears the Phosphothreonine mark. The residue at position 161 (Lys161) is an N6-acetyllysine; alternate. Lys161 is subject to N6-succinyllysine; alternate. Position 166 is a phosphoserine (Ser166). The residue at position 167 (Lys167) is an N6-acetyllysine; alternate. Residue Lys167 is modified to N6-succinyllysine; alternate. A Phosphoserine modification is found at Ser184. Arg204 carries the post-translational modification Omega-N-methylarginine. Positions 215, 217, 218, 219, and 220 each coordinate ATP. Thr219 lines the Mg(2+) pocket. Lys230 and Lys239 each carry N6-acetyllysine; alternate. Lys230 and Lys239 each carry N6-succinyllysine; alternate. An N6-acetyllysine modification is found at Lys240. 2 positions are modified to N6-acetyllysine; alternate: Lys261 and Lys305. N6-succinyllysine; alternate occurs at positions 261 and 305. Mg(2+) is bound at residue Asp312. Residue Lys427 is modified to N6-acetyllysine; alternate. The residue at position 427 (Lys427) is an N6-succinyllysine; alternate. Position 434 is an N6-acetyllysine (Lys434). 2 residues coordinate ATP: Gln473 and Gln475. Residues Lys498, Lys506, Lys531, and Lys539 each carry the N6-acetyllysine; alternate modification. 4 positions are modified to N6-succinyllysine; alternate: Lys498, Lys506, Lys531, and Lys539. Lys541 carries the post-translational modification N6-acetyllysine.

It belongs to the ATPase alpha/beta chains family. Homotrimer. Component of the ATP synthase complex composed at least of ATP5F1A/subunit alpha, ATP5F1B/subunit beta, ATP5MC1/subunit c (homooctomer), MT-ATP6/subunit a, MT-ATP8/subunit 8, ATP5ME/subunit e, ATP5MF/subunit f, ATP5MG/subunit g, ATP5MK/subunit k, ATP5MJ/subunit j, ATP5F1C/subunit gamma, ATP5F1D/subunit delta, ATP5F1E/subunit epsilon, ATP5PF/subunit F6, ATP5PB/subunit b, ATP5PD/subunit d, ATP5PO/subunit OSCP. ATP synthase complex consists of a soluble F(1) head domain (subunits alpha(3) and beta(3)) - the catalytic core - and a membrane F(0) domain - the membrane proton channel (subunits c, a, 8, e, f, g, k and j). These two domains are linked by a central stalk (subunits gamma, delta, and epsilon) rotating inside the F1 region and a stationary peripheral stalk (subunits F6, b, d, and OSCP). Interacts with ATPAF2. Interacts with HRG; the interaction occurs on the surface of T-cells and alters the cell morphology when associated with concanavalin (in vitro). Interacts with PLG (angiostatin peptide); the interaction inhibits most of the angiogenic properties of angiostatin. Interacts with BLOC1S1. Interacts with BCL2L1 isoform BCL-X(L); the interaction mediates the association of BCL2L1 isoform BCL-X(L) with the mitochondrial membrane F(1)F(0) ATP synthase and enhances neurons metabolic efficiency. Interacts with CLN5 and PPT1. Interacts with S100A1; this interaction increases F1-ATPase activity. Interacts with ABCB7; this interaction allows the regulation of cellular iron homeostasis and cellular reactive oxygen species (ROS) levels in cardiomyocytes. Post-translationally, acetylated on lysine residues. BLOC1S1 is required for acetylation. As to expression, expressed in flagella of epididymal sperm.

The protein localises to the mitochondrion. It localises to the mitochondrion inner membrane. It is found in the cell membrane. Its function is as follows. Subunit alpha, of the mitochondrial membrane ATP synthase complex (F(1)F(0) ATP synthase or Complex V) that produces ATP from ADP in the presence of a proton gradient across the membrane which is generated by electron transport complexes of the respiratory chain. ATP synthase complex consist of a soluble F(1) head domain - the catalytic core - and a membrane F(1) domain - the membrane proton channel. These two domains are linked by a central stalk rotating inside the F(1) region and a stationary peripheral stalk. During catalysis, ATP synthesis in the catalytic domain of F(1) is coupled via a rotary mechanism of the central stalk subunits to proton translocation. In vivo, can only synthesize ATP although its ATP hydrolase activity can be activated artificially in vitro. With the catalytic subunit beta (ATP5F1B), forms the catalytic core in the F(1) domain. Subunit alpha does not bear the catalytic high-affinity ATP-binding sites. The protein is ATP synthase F(1) complex subunit alpha, mitochondrial of Rattus norvegicus (Rat).